The sequence spans 502 residues: Histidine--tRNA ligase (502 aa).

It belongs to the class-II aminoacyl-tRNA synthetase family. Homodimer.

It localises to the cytoplasm. It catalyses the reaction tRNA(His) + L-histidine + ATP = L-histidyl-tRNA(His) + AMP + diphosphate + H(+). The protein is Histidine--tRNA ligase of Brucella suis (strain ATCC 23445 / NCTC 10510).